Here is a 452-residue protein sequence, read N- to C-terminus: NAD kinase 2, mitochondrial (452 aa).

A mitochondrion-targeting transit peptide spans 1 to 50 (MTCYRGFLLGSCRRVAGGRAALRGSGSGADGRRHLGHGQPRELAGGGSPA). A disordered region spans residues 23–52 (RGSGSGADGRRHLGHGQPRELAGGGSPADG). Residue lysine 64 is modified to N6-acetyllysine; alternate. N6-succinyllysine; alternate is present on lysine 64. The residue at position 176 (serine 176) is a Phosphoserine. Lysine 312 is modified (N6-succinyllysine). Lysine 327 bears the N6-acetyllysine; alternate mark. N6-succinyllysine; alternate is present on lysine 327. A Phosphoserine modification is found at serine 377. An N6-acetyllysine modification is found at lysine 407.

It belongs to the NAD kinase family. Homodimer.

Its subcellular location is the mitochondrion. It carries out the reaction NAD(+) + ATP = ADP + NADP(+) + H(+). Its activity is regulated as follows. Inhibited by NADH, NADPH and NADP(+). In terms of biological role, mitochondrial NAD(+) kinase that phosphorylates NAD(+) to yield NADP(+). Can use both ATP or inorganic polyphosphate as the phosphoryl donor. The chain is NAD kinase 2, mitochondrial (Nadk2) from Mus musculus (Mouse).